Consider the following 713-residue polypeptide: Polyphosphate kinase (713 aa).

Asparagine 63 contacts ATP. Arginine 394 and arginine 424 together coordinate Mg(2+). Residue histidine 454 is the Phosphohistidine intermediate of the active site. Residues tyrosine 487, arginine 583, and histidine 611 each contribute to the ATP site.

Belongs to the polyphosphate kinase 1 (PPK1) family. The cofactor is Mg(2+). An intermediate of this reaction is the autophosphorylated ppk in which a phosphate is covalently linked to a histidine residue through a N-P bond.

The enzyme catalyses [phosphate](n) + ATP = [phosphate](n+1) + ADP. In terms of biological role, catalyzes the reversible transfer of the terminal phosphate of ATP to form a long-chain polyphosphate (polyP). The polypeptide is Polyphosphate kinase (Prosthecochloris aestuarii (strain DSM 271 / SK 413)).